The sequence spans 350 residues: tRNA uridine(34) hydroxylase (350 aa).

The region spanning 146-240 (DDPDALFIDM…YARKAREQGL (95 aa)) is the Rhodanese domain. Cys200 functions as the Cysteine persulfide intermediate in the catalytic mechanism.

It belongs to the TrhO family.

It carries out the reaction uridine(34) in tRNA + AH2 + O2 = 5-hydroxyuridine(34) in tRNA + A + H2O. In terms of biological role, catalyzes oxygen-dependent 5-hydroxyuridine (ho5U) modification at position 34 in tRNAs. This chain is tRNA uridine(34) hydroxylase, found in Shigella sonnei (strain Ss046).